A 494-amino-acid polypeptide reads, in one-letter code: Alpha-amylase-related protein (494 aa).

A signal peptide spans 1–20 (MFKFALALTLCLAGASLSLA). The residue at position 21 (Gln-21) is a Pyrrolidone carboxylic acid. Cysteines 48 and 104 form a disulfide. Asn-118, Gln-169, and Asp-178 together coordinate Ca(2+). Cys-157 and Cys-171 form a disulfide bridge. Arg-206 is a chloride binding site. Asp-208 functions as the Nucleophile in the catalytic mechanism. His-212 is a Ca(2+) binding site. Residue Glu-245 is the Proton donor of the active site. Chloride-binding residues include Asn-308 and Arg-343. 3 cysteine pairs are disulfide-bonded: Cys-376–Cys-382, Cys-418–Cys-441, and Cys-448–Cys-460.

Belongs to the glycosyl hydrolase 13 family. Monomer. Requires Ca(2+) as cofactor. Chloride is required as a cofactor.

It localises to the secreted. It catalyses the reaction Endohydrolysis of (1-&gt;4)-alpha-D-glucosidic linkages in polysaccharides containing three or more (1-&gt;4)-alpha-linked D-glucose units.. The chain is Alpha-amylase-related protein (Amyrel) from Drosophila punjabiensis (Fruit fly).